The chain runs to 338 residues: MQAQMEDFKIKEEIWIEKYRPVRLNQVAGQEETIERLMSYVATKNLPHLLFSGPPGVGKTASAVSIAREIFGEDLWRENFTELNASDERGIDIVRNKIKNFAKTAPMGGAPFKIIFLDEADALTSDAQSALRRTMEKFSSNCRFILSCNYSSKIIEPIQSRCAVYRFRRLSDKAIRERLEYIAKEQDLSITDGGYEALIYVAQGDMRKAVNSLQAAAFIDVEKPISRETIYRTTATANPEEIKNLIETALRGNFRVARKELNRLLYEEGLSGEDIVGQIYRVVSEMDNLMILDLGLSERDIVGLVDIIGETDFRLTEGASEKIQLEALLAHFALSREE.

Residue Gly53–Thr60 participates in ATP binding.

It belongs to the activator 1 small subunits family. RfcS subfamily. As to quaternary structure, heteromultimer composed of small subunits (RfcS) and large subunits (RfcL).

Part of the RFC clamp loader complex which loads the PCNA sliding clamp onto DNA. The polypeptide is Replication factor C small subunit (Methanosarcina mazei (strain ATCC BAA-159 / DSM 3647 / Goe1 / Go1 / JCM 11833 / OCM 88) (Methanosarcina frisia)).